Reading from the N-terminus, the 196-residue chain is Large ribosomal subunit protein eL15 (196 aa).

A compositionally biased stretch (basic residues) spans 69–98; it reads RKGGSRKQRHKAGRRSKRQGVNRLSRRKSI. Disordered stretches follow at residues 69 to 100 and 161 to 196; these read RKGG…SIQR and FRGL…RQGK. Over residues 186–196 the composition is skewed to polar residues; the sequence is PSVTGNDRQGK.

Belongs to the eukaryotic ribosomal protein eL15 family.

This Halorubrum lacusprofundi (strain ATCC 49239 / DSM 5036 / JCM 8891 / ACAM 34) protein is Large ribosomal subunit protein eL15.